The chain runs to 356 residues: Protein-glutamate methylesterase/protein-glutamine glutaminase (356 aa).

One can recognise a Response regulatory domain in the interval 4–121; it reads KVLIVDDSAL…QSGMLEYTDL (118 aa). Asp-55 bears the 4-aspartylphosphate mark. Positions 156-349 constitute a CheB-type methylesterase domain; that stretch reads PLTSSEKLII…RRVLEFFAAH (194 aa). Residues Ser-169, His-195, and Asp-291 contribute to the active site.

It belongs to the CheB family. Phosphorylated by CheA. Phosphorylation of the N-terminal regulatory domain activates the methylesterase activity.

It is found in the cytoplasm. The enzyme catalyses [protein]-L-glutamate 5-O-methyl ester + H2O = L-glutamyl-[protein] + methanol + H(+). The catalysed reaction is L-glutaminyl-[protein] + H2O = L-glutamyl-[protein] + NH4(+). Functionally, involved in chemotaxis. Part of a chemotaxis signal transduction system that modulates chemotaxis in response to various stimuli. Catalyzes the demethylation of specific methylglutamate residues introduced into the chemoreceptors (methyl-accepting chemotaxis proteins or MCP) by CheR. Also mediates the irreversible deamidation of specific glutamine residues to glutamic acid. This chain is Protein-glutamate methylesterase/protein-glutamine glutaminase, found in Thiobacillus denitrificans (strain ATCC 25259 / T1).